A 1171-amino-acid chain; its full sequence is DNA-directed RNA polymerase subunit beta (1171 aa).

This sequence belongs to the RNA polymerase beta chain family. In terms of assembly, the RNAP catalytic core consists of 2 alpha, 1 beta, 1 beta' and 1 omega subunit. When a sigma factor is associated with the core the holoenzyme is formed, which can initiate transcription.

The catalysed reaction is RNA(n) + a ribonucleoside 5'-triphosphate = RNA(n+1) + diphosphate. In terms of biological role, DNA-dependent RNA polymerase catalyzes the transcription of DNA into RNA using the four ribonucleoside triphosphates as substrates. This Arthrobacter sp. (strain FB24) protein is DNA-directed RNA polymerase subunit beta.